The chain runs to 837 residues: Tuftelin-interacting protein 11 (837 aa).

Residues 1–13 (MSLSHLYRDGEGH) are compositionally biased toward basic and acidic residues. Disordered regions lie at residues 1 to 31 (MSLSHLYRDGEGHMDDDDDERENFEITDWDL), 54 to 73 (WAERDSDEERPSFGGKRARD), and 85 to 133 (LKKG…KGFA). Residues 1–50 (MSLSHLYRDGEGHMDDDDDERENFEITDWDLQNEFNPNRQRHWQTKEEAT) form a required for interaction with DHX15 region. A Phosphoserine modification is found at Ser2. The segment covering 14–28 (MDDDDDERENFEITD) has biased composition (acidic residues). Basic and acidic residues predominate over residues 54–64 (WAERDSDEERP). Phosphoserine occurs at positions 59 and 98. Residues 91 to 102 (EEAELEDSEDEE) show a composition bias toward acidic residues. Residues 103–116 (KPVKQDDFPKDFGP) show a composition bias toward basic and acidic residues. Ser144 carries the phosphoserine modification. Residues 149–195 (TKGIGQKLLQKMGYVPGRGLGKNAQGIINPIEAKQRKGKGAVGAYGS) form the G-patch domain. Disordered regions lie at residues 183–236 (QRKG…KKKP) and 289–312 (HNVPDDGLPLPSQQPPQPGKEAKA). Ser210 is modified (phosphoserine). A compositionally biased stretch (basic and acidic residues) spans 217 to 231 (EFQKELSQWRKDPSG). Residues 700–705 (VKDKFN) carry the Nuclear localization signal motif. Residues 710–734 (IMNRAVSSNVGAYMQPGARENIAYL) are required for nuclear speckle localization.

Belongs to the TFP11/STIP family. In terms of assembly, identified in the spliceosome C complex. Found in the Intron Large (IL) complex, a post-mRNA release spliceosomal complex containing the excised intron, U2, U5 and U6 snRNPs, and splicing factors. Interacts with TUFT1. Interacts with DHX15; indicative for a recruitment of DHX15 to the IL complex. Interacts with GCFC2.

The protein resides in the cytoplasm. Its subcellular location is the nucleus. Its function is as follows. Involved in pre-mRNA splicing, specifically in spliceosome disassembly during late-stage splicing events. Intron turnover seems to proceed through reactions in two lariat-intron associated complexes termed Intron Large (IL) and Intron Small (IS). In cooperation with DHX15 seems to mediate the transition of the U2, U5 and U6 snRNP-containing IL complex to the snRNP-free IS complex leading to efficient debranching and turnover of excised introns. May play a role in the differentiation of ameloblasts and odontoblasts or in the forming of the enamel extracellular matrix. The polypeptide is Tuftelin-interacting protein 11 (TFIP11) (Canis lupus familiaris (Dog)).